We begin with the raw amino-acid sequence, 252 residues long: uncharacterized protein (252 aa).

2 stretches are compositionally biased toward polar residues: residues 108-122 and 136-153; these read RTTMRQGRFPSSSSE and MPNTGASSSQDPFTNSQS. Residues 108-252 are disordered; that stretch reads RTTMRQGRFP…LIWNDSSSSK (145 aa). A compositionally biased stretch (basic and acidic residues) spans 154-172; it reads TEKEDAMYSKDNGFEDRSK. The segment covering 201-226 has biased composition (polar residues); that stretch reads VKSTDSAFSGQENSEAFPSRTSNLGS.

Its subcellular location is the cytoplasm. The protein resides in the mitochondrion. It localises to the nucleus. This is an uncharacterized protein from Schizosaccharomyces pombe (strain 972 / ATCC 24843) (Fission yeast).